A 725-amino-acid chain; its full sequence is Non-structural protein 4 (725 aa).

2 disordered regions span residues 1 to 26 (MSKG…GNRN) and 666 to 725 (DEVE…TKDE). Polar residues predominate over residues 7–16 (TVTSLVSGPP). The segment covering 675–686 (ENQKQELDAKSD) has biased composition (basic and acidic residues). Acidic residues predominate over residues 687-709 (DVEESSVEGEEDDDGSSASEETD).

In Rice gall dwarf virus (RGDV), this protein is Non-structural protein 4.